The chain runs to 183 residues: Adenine phosphoribosyltransferase (183 aa).

It belongs to the purine/pyrimidine phosphoribosyltransferase family. As to quaternary structure, homodimer.

The protein localises to the cytoplasm. It carries out the reaction AMP + diphosphate = 5-phospho-alpha-D-ribose 1-diphosphate + adenine. It functions in the pathway purine metabolism; AMP biosynthesis via salvage pathway; AMP from adenine: step 1/1. Catalyzes a salvage reaction resulting in the formation of AMP, that is energically less costly than de novo synthesis. In Shewanella sp. (strain ANA-3), this protein is Adenine phosphoribosyltransferase.